Here is a 511-residue protein sequence, read N- to C-terminus: Ribose import ATP-binding protein RbsA (511 aa).

ABC transporter domains follow at residues 9–245 (FEAK…VGRD) and 261–506 (LRAE…LPRR). 41-48 (GENGAGKS) lines the ATP pocket.

Belongs to the ABC transporter superfamily. Ribose importer (TC 3.A.1.2.1) family. As to quaternary structure, the complex is composed of an ATP-binding protein (RbsA), two transmembrane proteins (RbsC) and a solute-binding protein (RbsB).

It is found in the cell inner membrane. The enzyme catalyses D-ribose(out) + ATP + H2O = D-ribose(in) + ADP + phosphate + H(+). In terms of biological role, part of the ABC transporter complex RbsABC involved in ribose import. Responsible for energy coupling to the transport system. This is Ribose import ATP-binding protein RbsA from Rhodopirellula baltica (strain DSM 10527 / NCIMB 13988 / SH1).